An 882-amino-acid polypeptide reads, in one-letter code: DNA polymerase 1 (882 aa).

Residues 1–31 are disordered; sequence MTKQLTLFDIPSSKPAKSEQNTQQSQQSAPV. Positions 18–29 are enriched in polar residues; sequence SEQNTQQSQQSA.

It belongs to the DNA polymerase type-B family. As to quaternary structure, interacts with PCNA subunit PCNA2 and weakly with PCNA3.

It catalyses the reaction DNA(n) + a 2'-deoxyribonucleoside 5'-triphosphate = DNA(n+1) + diphosphate. Its activity is regulated as follows. DNA synthesis is stimulated by PCNA heterotrimers. Its function is as follows. This polymerase possesses two enzymatic activities: DNA synthesis (polymerase) and an exonucleolytic activity that degrades single-stranded DNA in the 3'- to 5'-direction. DNA polymerase I, DNA ligase and the flap endonuclease may be constitutively associated with the PCNA heterotrimer forming a scanning complex able to couple DNA synthesis and Okazaki fragment maturation. The sequence is that of DNA polymerase 1 (dpo1) from Saccharolobus solfataricus (strain ATCC 35092 / DSM 1617 / JCM 11322 / P2) (Sulfolobus solfataricus).